The sequence spans 231 residues: Large ribosomal subunit protein uL1 (231 aa).

The protein belongs to the universal ribosomal protein uL1 family. In terms of assembly, part of the 50S ribosomal subunit.

Functionally, binds directly to 23S rRNA. The L1 stalk is quite mobile in the ribosome, and is involved in E site tRNA release. Its function is as follows. Protein L1 is also a translational repressor protein, it controls the translation of the L11 operon by binding to its mRNA. The chain is Large ribosomal subunit protein uL1 from Acinetobacter baumannii (strain AB0057).